A 382-amino-acid polypeptide reads, in one-letter code: Pyrimidine monooxygenase RutA (382 aa).

FMN contacts are provided by residues 68–69 (IK), N134, E143, 159–160 (RY), and S209.

The protein belongs to the NtaA/SnaA/DszA monooxygenase family. RutA subfamily.

The enzyme catalyses uracil + FMNH2 + NADH + O2 = (Z)-3-ureidoacrylate + FMN + NAD(+) + H2O + H(+). It carries out the reaction thymine + FMNH2 + NADH + O2 = (Z)-2-methylureidoacrylate + FMN + NAD(+) + H2O + H(+). Functionally, catalyzes the pyrimidine ring opening between N-3 and C-4 by an unusual flavin hydroperoxide-catalyzed mechanism, adding oxygen atoms in the process to yield ureidoacrylate peracid, that immediately reacts with FMN forming ureidoacrylate and FMN-N(5)-oxide. The FMN-N(5)-oxide reacts spontaneously with NADH to produce FMN. Requires the flavin reductase RutF to regenerate FMN in vivo. The polypeptide is Pyrimidine monooxygenase RutA (rutA) (Escherichia coli O157:H7).